A 152-amino-acid polypeptide reads, in one-letter code: Lipoprotein signal peptidase (152 aa).

The next 2 membrane-spanning stretches (helical) occupy residues 55–75 and 85–105; these read NKMWFFYIITVVFVVFIVFYM and LGISLGLILGGAIGNFIDRVF. Residues Asp111 and Asp129 contribute to the active site. Residues 124–144 traverse the membrane as a helical segment; that stretch reads VFNIADSALCIGVVLIIIQTL.

It belongs to the peptidase A8 family.

It localises to the cell membrane. It catalyses the reaction Release of signal peptides from bacterial membrane prolipoproteins. Hydrolyzes -Xaa-Yaa-Zaa-|-(S,diacylglyceryl)Cys-, in which Xaa is hydrophobic (preferably Leu), and Yaa (Ala or Ser) and Zaa (Gly or Ala) have small, neutral side chains.. Its pathway is protein modification; lipoprotein biosynthesis (signal peptide cleavage). Its function is as follows. This protein specifically catalyzes the removal of signal peptides from prolipoproteins. The protein is Lipoprotein signal peptidase of Bacillus cereus (strain G9842).